Consider the following 954-residue polypeptide: Isoleucine--tRNA ligase (954 aa).

The 'HIGH' region motif lies at 60-70 (PYANGALHMGH). An L-isoleucyl-5'-AMP-binding site is contributed by glutamate 564. The 'KMSKS' region signature appears at 605 to 609 (KMSKS). Lysine 608 serves as a coordination point for ATP. Zn(2+) is bound by residues cysteine 923, cysteine 926, cysteine 943, and cysteine 946.

It belongs to the class-I aminoacyl-tRNA synthetase family. IleS type 1 subfamily. As to quaternary structure, monomer. Requires Zn(2+) as cofactor.

Its subcellular location is the cytoplasm. The catalysed reaction is tRNA(Ile) + L-isoleucine + ATP = L-isoleucyl-tRNA(Ile) + AMP + diphosphate. Its function is as follows. Catalyzes the attachment of isoleucine to tRNA(Ile). As IleRS can inadvertently accommodate and process structurally similar amino acids such as valine, to avoid such errors it has two additional distinct tRNA(Ile)-dependent editing activities. One activity is designated as 'pretransfer' editing and involves the hydrolysis of activated Val-AMP. The other activity is designated 'posttransfer' editing and involves deacylation of mischarged Val-tRNA(Ile). This chain is Isoleucine--tRNA ligase, found in Synechococcus sp. (strain ATCC 27144 / PCC 6301 / SAUG 1402/1) (Anacystis nidulans).